A 379-amino-acid chain; its full sequence is Cobalt-precorrin-5B C(1)-methyltransferase (379 aa).

This sequence belongs to the CbiD family.

It catalyses the reaction Co-precorrin-5B + S-adenosyl-L-methionine = Co-precorrin-6A + S-adenosyl-L-homocysteine. It functions in the pathway cofactor biosynthesis; adenosylcobalamin biosynthesis; cob(II)yrinate a,c-diamide from sirohydrochlorin (anaerobic route): step 6/10. Catalyzes the methylation of C-1 in cobalt-precorrin-5B to form cobalt-precorrin-6A. The protein is Cobalt-precorrin-5B C(1)-methyltransferase of Salmonella typhi.